We begin with the raw amino-acid sequence, 79 residues long: Sulfur carrier protein TusA (79 aa).

Cys17 functions as the Cysteine persulfide intermediate in the catalytic mechanism.

Belongs to the sulfur carrier protein TusA family.

It localises to the cytoplasm. In terms of biological role, sulfur carrier protein which probably makes part of a sulfur-relay system. This is Sulfur carrier protein TusA from Mannheimia succiniciproducens (strain KCTC 0769BP / MBEL55E).